The chain runs to 756 residues: Phosphoinositide 3-kinase regulatory subunit 6 (756 aa).

Disordered stretches follow at residues 570–589 (SKSP…EGTG) and 716–738 (CSRT…EKNM). Residues 717–731 (SRTQKSKTSALNSHG) are compositionally biased toward polar residues.

As to quaternary structure, heterodimer of a catalytic subunit (PIK3CG) and a regulatory (PIK3R6) subunit. The binding of PIK3R6 to PIK3CG may exclude the binding of PIK3R5 to PIK3CG. Interacts with beta-gamma G protein dimers. Interacts with PDE3B and RAPGEF3; form a signaling complex that regulates phosphatidylinositol 3-kinase gamma in angiogenesis. In terms of tissue distribution, highly expressed in heart. In a lower extent, also expressed in brain, spleen, lung, liver, kidney, prostate, thyroid, salivary gland, dendritic cells, macrophages and neutrophils.

It localises to the cytoplasm. The protein localises to the cell membrane. Functionally, regulatory subunit of the PI3K gamma complex. Acts as an adapter to drive activation of PIK3CG by beta-gamma G protein dimers. The PIK3CG:PIK3R6 heterodimer is much less sensitive to beta-gamma G proteins than PIK3CG:PIK3R5 and its membrane recruitment and beta-gamma G protein dimer-dependent activation requires HRAS bound to PIK3CG. Recruits of the PI3K gamma complex to a PDE3B:RAPGEF3 signaling complex involved in angiogenesis; signaling seems to involve RRAS. The chain is Phosphoinositide 3-kinase regulatory subunit 6 (Pik3r6) from Mus musculus (Mouse).